Reading from the N-terminus, the 241-residue chain is Large ribosomal subunit protein uL3 (241 aa).

The protein belongs to the universal ribosomal protein uL3 family. As to quaternary structure, part of the 50S ribosomal subunit. Forms a cluster with proteins L14 and L19.

In terms of biological role, one of the primary rRNA binding proteins, it binds directly near the 3'-end of the 23S rRNA, where it nucleates assembly of the 50S subunit. The polypeptide is Large ribosomal subunit protein uL3 (Aquifex aeolicus (strain VF5)).